The sequence spans 317 residues: Annexin D2 (317 aa).

Position 2 is an N-acetylalanine (A2). Annexin repeat units follow at residues 11–82, 83–154, 166–238, and 242–313; these read PLPE…LWTL, DPPE…PLVS, MLAR…AVIT, and YPEK…ALLG. Ca(2+)-binding residues include F24, G26, G28, and E68. S95 bears the Phosphoserine mark. A phosphothreonine mark is found at T100 and T112. Position 129 is a phosphotyrosine (Y129). The Ca(2+) site is built by I255 and G259. Position 284 is a phosphotyrosine (Y284). Position 289 is a phosphoserine (S289). D299, T300, and E305 together coordinate Ca(2+).

The protein belongs to the annexin (TC 1.A.31.1) family. As to expression, expressed mainly in roots and flowers. Low in stems and bearly detectable in leaves.

The protein resides in the cytoplasm. It is found in the cytosol. It localises to the membrane. In terms of biological role, may mediate regulated, targeted secretion of Golgi-derived vesicles during seedling development. This Arabidopsis thaliana (Mouse-ear cress) protein is Annexin D2 (ANN2).